Reading from the N-terminus, the 67-residue chain is Protein AaeX (67 aa).

2 helical membrane-spanning segments follow: residues 3-23 (LLPV…ELLI) and 39-59 (GIYE…CCLF).

This sequence belongs to the AaeX family.

The protein localises to the cell membrane. The polypeptide is Protein AaeX (Yersinia pseudotuberculosis serotype O:1b (strain IP 31758)).